Consider the following 392-residue polypeptide: Zinc finger protein ham-2 (392 aa).

C2H2-type zinc fingers lie at residues 16 to 39 (FPCS…MQAH) and 43 to 66 (YTCT…YRVH). The C2H2-type 3; degenerate zinc finger occupies 72–95 (FMCRCCNWAFPDKTSLHIHMQSML). Disordered stretches follow at residues 106–130 (LAKS…PFSP) and 278–303 (HISH…HSGE). Positions 112–123 (VVDSTSESGSPR) are enriched in polar residues. Residues 289–303 (SDSHISGGSSSHSGE) are compositionally biased toward low complexity.

The protein resides in the nucleus. Its function is as follows. Probable transcription factor that acts downstream of egl-15, to promote migration of the HSN motor neurons from the tail to the gonad primordium during HSN cell differentiation. This Caenorhabditis elegans protein is Zinc finger protein ham-2.